Reading from the N-terminus, the 422-residue chain is S-adenosylmethionine synthase (422 aa).

His-15 lines the ATP pocket. Residue Asp-17 participates in Mg(2+) binding. Position 43 (Glu-43) interacts with K(+). The L-methionine site is built by Glu-56 and Gln-99. Residues 99–109 form a flexible loop region; that stretch reads QSPDISRGVTE. ATP is bound by residues 166-168, 232-233, Asp-241, 247-248, Ala-264, and Lys-268; these read DGK, RF, and RK. Asp-241 is an L-methionine binding site. Lys-272 lines the L-methionine pocket. A disordered region spans residues 390–422; sequence AVPATTNGAGSKNGSGSKKEPKRKGKKETGAQA.

This sequence belongs to the AdoMet synthase family. As to quaternary structure, homotetramer; dimer of dimers. Mg(2+) serves as cofactor. K(+) is required as a cofactor.

The protein localises to the cytoplasm. It carries out the reaction L-methionine + ATP + H2O = S-adenosyl-L-methionine + phosphate + diphosphate. Its pathway is amino-acid biosynthesis; S-adenosyl-L-methionine biosynthesis; S-adenosyl-L-methionine from L-methionine: step 1/1. Catalyzes the formation of S-adenosylmethionine (AdoMet) from methionine and ATP. The overall synthetic reaction is composed of two sequential steps, AdoMet formation and the subsequent tripolyphosphate hydrolysis which occurs prior to release of AdoMet from the enzyme. This chain is S-adenosylmethionine synthase, found in Sorangium cellulosum (strain So ce56) (Polyangium cellulosum (strain So ce56)).